We begin with the raw amino-acid sequence, 246 residues long: Probable transcriptional regulatory protein ASA_2843 (246 aa).

This sequence belongs to the TACO1 family.

It localises to the cytoplasm. The protein is Probable transcriptional regulatory protein ASA_2843 of Aeromonas salmonicida (strain A449).